A 348-amino-acid polypeptide reads, in one-letter code: Peptide-N(4)-(N-acetyl-beta-glucosaminyl)asparagine amidase (348 aa).

Cys116, Cys119, Cys151, and Cys154 together coordinate Zn(2+). The Nucleophile role is filled by Cys177. Catalysis depends on residues His204 and Asp221. Glu224 contributes to the substrate binding site. Positions 311 to 348 (PSATPTKEMQKLKISKTGNKGRISGSAEWKESRGENGK) are disordered. Residues 338–348 (EWKESRGENGK) show a composition bias toward basic and acidic residues.

The protein belongs to the transglutaminase-like superfamily. PNGase family. It depends on Zn(2+) as a cofactor.

The protein localises to the cytoplasm. It carries out the reaction Hydrolysis of an N(4)-(acetyl-beta-D-glucosaminyl)asparagine residue in which the glucosamine residue may be further glycosylated, to yield a (substituted) N-acetyl-beta-D-glucosaminylamine and a peptide containing an aspartate residue.. Functionally, specifically deglycosylates the denatured form of N-linked glycoproteins in the cytoplasm and assists their proteasome-mediated degradation. Cleaves the beta-aspartyl-glucosamine (GlcNAc) of the glycan and the amide side chain of Asn, converting Asn to Asp. Prefers proteins containing high-mannose over those bearing complex type oligosaccharides. Can recognize misfolded proteins in the endoplasmic reticulum that are exported to the cytosol to be destroyed and deglycosylate them, while it has no activity toward native proteins. Deglycosylation is a prerequisite for subsequent proteasome-mediated degradation of some, but not all, misfolded glycoproteins. The protein is Peptide-N(4)-(N-acetyl-beta-glucosaminyl)asparagine amidase (PNG1) of Candida glabrata (strain ATCC 2001 / BCRC 20586 / JCM 3761 / NBRC 0622 / NRRL Y-65 / CBS 138) (Yeast).